Consider the following 166-residue polypeptide: Small ribosomal subunit protein uS9 (166 aa).

The tract at residues 135-166 (KKAGFLTRDPRATERKKYGLKKARKAPQYSKR) is disordered. Basic and acidic residues predominate over residues 142–151 (RDPRATERKK). The span at 152 to 166 (YGLKKARKAPQYSKR) shows a compositional bias: basic residues.

The protein belongs to the universal ribosomal protein uS9 family.

This Mycobacterium avium (strain 104) protein is Small ribosomal subunit protein uS9.